A 91-amino-acid chain; its full sequence is Conotoxin VnMKLT1-021 (91 aa).

A signal peptide spans 1–22; it reads MKLTCVMIVAVLFLTAWTFVTA. Positions 23-57 are excised as a propeptide; it reads DDPRDGPDTAVGWRKLFSEARDEMKNREASKLNER. Intrachain disulfides connect Cys59/Cys78, Cys66/Cys82, and Cys77/Cys86.

It belongs to the conotoxin O1 superfamily. In terms of tissue distribution, expressed by the venom duct.

The protein localises to the secreted. The protein is Conotoxin VnMKLT1-021 of Conus ventricosus (Mediterranean cone).